A 355-amino-acid polypeptide reads, in one-letter code: Hydroxylysine kinase (355 aa).

Asp215 functions as the Proton acceptor in the catalytic mechanism.

This sequence belongs to the aminoglycoside phosphotransferase family.

Its subcellular location is the cytoplasm. The catalysed reaction is (5R)-5-hydroxy-L-lysine + GTP = (5R)-5-phosphooxy-L-lysine + GDP + H(+). In terms of biological role, catalyzes the GTP-dependent phosphorylation of 5-hydroxy-L-lysine. This chain is Hydroxylysine kinase (hykk), found in Danio rerio (Zebrafish).